The chain runs to 237 residues: Small ribosomal subunit protein uS2c (237 aa).

This sequence belongs to the universal ribosomal protein uS2 family.

It localises to the plastid. This Epifagus virginiana (Beechdrops) protein is Small ribosomal subunit protein uS2c (rps2).